The primary structure comprises 24 residues: Outer membrane protein (24 aa).

Belongs to the Gram-negative porin family. In terms of assembly, homotrimer.

The protein resides in the cell outer membrane. In terms of biological role, forms pores that allow passive diffusion of small molecules across the outer membrane. This Sodalis glossinidius protein is Outer membrane protein.